A 411-amino-acid chain; its full sequence is Serine hydroxymethyltransferase (411 aa).

120 to 122 provides a ligand contact to (6S)-5,6,7,8-tetrahydrofolate; the sequence is GHL. Position 225 is an N6-(pyridoxal phosphate)lysine (lysine 225). A (6S)-5,6,7,8-tetrahydrofolate-binding site is contributed by 350–352; it reads SPF.

It belongs to the SHMT family. As to quaternary structure, homodimer. Requires pyridoxal 5'-phosphate as cofactor.

It localises to the cytoplasm. The enzyme catalyses (6R)-5,10-methylene-5,6,7,8-tetrahydrofolate + glycine + H2O = (6S)-5,6,7,8-tetrahydrofolate + L-serine. Its pathway is one-carbon metabolism; tetrahydrofolate interconversion. The protein operates within amino-acid biosynthesis; glycine biosynthesis; glycine from L-serine: step 1/1. Functionally, catalyzes the reversible interconversion of serine and glycine with tetrahydrofolate (THF) serving as the one-carbon carrier. This reaction serves as the major source of one-carbon groups required for the biosynthesis of purines, thymidylate, methionine, and other important biomolecules. Also exhibits THF-independent aldolase activity toward beta-hydroxyamino acids, producing glycine and aldehydes, via a retro-aldol mechanism. This is Serine hydroxymethyltransferase from Lactobacillus gasseri (strain ATCC 33323 / DSM 20243 / BCRC 14619 / CIP 102991 / JCM 1131 / KCTC 3163 / NCIMB 11718 / NCTC 13722 / AM63).